Reading from the N-terminus, the 420-residue chain is MNIIDELEWRGAVNQQTDEEGLRKLVEEKKISLYCGVDPTGDSMHIGHLIPFMMMKRFQLAGHHPVILIGGATGTIGDPSGRQSERQLQTLEVVQHNVDALTAQMKKLFDFGGNSEVKMVNNYDWTHEINIIEFLRDYGKNFSINSMLAKDIVASRLDTGISFTEFTYQILQAMDFHHLYTKEDVQLQIGGSDQWGNITSGLDLIRKLEGHEAKVFGLTIPLLLKSDGTKFGKSAGGAVWLDPEKTTPFEFYQFWVNTDDRDVIKYLKYFTFLTKERIDELATKVEVEPHKREAQKVLAEEMTKFVHGEEAFLQAEKITAALFSGDIKSLTADEIEQGFKEMPTFQSSKETKNIVEWLVDLGIEPSRRQAREDINNGAISMNGEKVTDVGTDVTVENSFDGRFIIIRKGKKNYSLVKLGE.

Y34 serves as a coordination point for L-tyrosine. A 'HIGH' region motif is present at residues 39–48 (PTGDSMHIGH). Positions 168 and 172 each coordinate L-tyrosine. A 'KMSKS' region motif is present at residues 230-234 (KFGKS). Position 233 (K233) interacts with ATP. Residues 352-418 (KNIVEWLVDL…GKKNYSLVKL (67 aa)) form the S4 RNA-binding domain.

Belongs to the class-I aminoacyl-tRNA synthetase family. TyrS type 1 subfamily. In terms of assembly, homodimer.

The protein resides in the cytoplasm. It carries out the reaction tRNA(Tyr) + L-tyrosine + ATP = L-tyrosyl-tRNA(Tyr) + AMP + diphosphate + H(+). Functionally, catalyzes the attachment of tyrosine to tRNA(Tyr) in a two-step reaction: tyrosine is first activated by ATP to form Tyr-AMP and then transferred to the acceptor end of tRNA(Tyr). The sequence is that of Tyrosine--tRNA ligase 2 from Bacillus cereus (strain ATCC 14579 / DSM 31 / CCUG 7414 / JCM 2152 / NBRC 15305 / NCIMB 9373 / NCTC 2599 / NRRL B-3711).